Here is a 325-residue protein sequence, read N- to C-terminus: MIERIWSGCSLLWVLLLPLSWLYGLISGAIRLSYQLGLRKAWRAPVPVVVVGNLTAGGNGKTPVVVWLVEQLQQRGIRAGVVSRGYGGKAAHYPLVLNDATTPAEAGDEPVLIYQRTGAPVAVSANRAEAVQALMGHATPQIIITDDGLQHYALARDKEIVVVDGVRRFGNGWWLPAGPMRERASRLKQVDAVITNGGEARSGEIAMQLNPGLAVNLRSGEKRPVNTLNNVVAMAGIGHPPRFFATLEKCGLTPVKTVSLADHQALREADVLALLSEGQSLLMTEKDAVKCRAFAHDNWWYLPVDATLAQPQADQLLKDILTLVR.

An ATP-binding site is contributed by 55–62; that stretch reads TAGGNGKT.

It belongs to the LpxK family.

It catalyses the reaction a lipid A disaccharide + ATP = a lipid IVA + ADP + H(+). Its pathway is glycolipid biosynthesis; lipid IV(A) biosynthesis; lipid IV(A) from (3R)-3-hydroxytetradecanoyl-[acyl-carrier-protein] and UDP-N-acetyl-alpha-D-glucosamine: step 6/6. Its function is as follows. Transfers the gamma-phosphate of ATP to the 4'-position of a tetraacyldisaccharide 1-phosphate intermediate (termed DS-1-P) to form tetraacyldisaccharide 1,4'-bis-phosphate (lipid IVA). This is Tetraacyldisaccharide 4'-kinase from Cronobacter sakazakii (strain ATCC BAA-894) (Enterobacter sakazakii).